Here is a 164-residue protein sequence, read N- to C-terminus: UBA-like domain-containing protein 2 (164 aa).

An N-acetylserine modification is found at Ser2. The segment at 144–164 (PPGASQGGAPQKAMAAMDGQR) is disordered.

Belongs to the UBALD family.

In Mus musculus (Mouse), this protein is UBA-like domain-containing protein 2 (Ubald2).